The sequence spans 444 residues: MLQCAPKKNERLRGSCDFCTQSKLRCNKNKPSCRRCTIQQQPCVYSVARRTGRPPKHPRTANDCQEANGQHGEQDPVTSTPGGSCQQQSNHLLDVEGDGANFTLADASTTAQGRETPASSALDNALLVGETFGFSSLLDDPLIQSDDFLSFSLCMPPGEEEGHMASPRALNGSTGPCSPTVLSSIDVPHLPARFGFLESSVESGLHGRTGPHLVEQPDKIVPSSFSEMEKIYDEGLTFSGLDSAINAVTNNGKGEPSASGTMAAHPHSKRQCFCSTSMSKLQMLISHPTLCQKNSRARFDMTLFLEEVVFNIHRDVLQCLVCQSKSLHSLASLCICTDWVIEALRDVAQDLSSGQDNLGGFRAGLCPPKDKFSICVGRFVLDDQLRESCTRSLVKYRLRKLVPIMDTMMKLNYRGAGGALSQAIRTMVEDVRHKIESALGMMEL.

The zn(2)-C6 fungal-type DNA-binding region spans 16–43 (CDFCTQSKLRCNKNKPSCRRCTIQQQPC). The interval 49–89 (RRTGRPPKHPRTANDCQEANGQHGEQDPVTSTPGGSCQQQS) is disordered. The span at 50-59 (RTGRPPKHPR) shows a compositional bias: basic residues. The segment covering 76–89 (PVTSTPGGSCQQQS) has biased composition (polar residues).

The protein resides in the nucleus. Transcription factor that regulates the expression of the gene clusters that mediate the biosynthesis of the host-selective toxins (HSTs) AK-toxins responsible for Japanese pear black spot disease by the Japanese pear pathotype. AK-toxins are esters of 9,10-epoxy 8-hydroxy 9-methyldecatrienoic acid (EDA). On cellular level, AK-toxins affect plasma membrane of susceptible cells and cause a sudden increase in loss of K(+) after a few minutes of toxin treatment. This is Transcription activator AKTR-3 from Alternaria alternata (Alternaria rot fungus).